A 242-amino-acid chain; its full sequence is Probable ABC transporter ATP-binding protein PEB1C (242 aa).

The region spanning 2-236 (IELKNVNKYY…PKTERARLFL (235 aa)) is the ABC transporter domain. Residue 34 to 41 (GPSGSGKS) coordinates ATP.

The protein belongs to the ABC transporter superfamily.

The protein localises to the cell inner membrane. Functionally, most probably involved, with PEB1, in a binding-protein-dependent transport system for an amino acid. Probably responsible for energy coupling to the transport system. In Campylobacter jejuni subsp. jejuni serotype O:23/36 (strain 81-176), this protein is Probable ABC transporter ATP-binding protein PEB1C (peb1C).